The following is a 348-amino-acid chain: Dihydroorotase (348 aa).

Zn(2+) is bound by residues histidine 17 and histidine 19. Substrate is bound by residues 19 to 21 (HLR) and asparagine 45. Residues lysine 103, histidine 140, and histidine 178 each contribute to the Zn(2+) site. Lysine 103 is subject to N6-carboxylysine. Residue histidine 140 participates in substrate binding. Leucine 223 is a binding site for substrate. A Zn(2+)-binding site is contributed by aspartate 251. Residue aspartate 251 is part of the active site. Histidine 255 and alanine 267 together coordinate substrate.

It belongs to the metallo-dependent hydrolases superfamily. DHOase family. Class II DHOase subfamily. As to quaternary structure, homodimer. Zn(2+) serves as cofactor.

The catalysed reaction is (S)-dihydroorotate + H2O = N-carbamoyl-L-aspartate + H(+). It participates in pyrimidine metabolism; UMP biosynthesis via de novo pathway; (S)-dihydroorotate from bicarbonate: step 3/3. Functionally, catalyzes the reversible cyclization of carbamoyl aspartate to dihydroorotate. The polypeptide is Dihydroorotase (Salmonella paratyphi A (strain ATCC 9150 / SARB42)).